The sequence spans 1064 residues: WD repeat-containing protein on Y chromosome (1064 aa).

WD repeat units follow at residues 153-197 (EEVT…IRTA), 326-365 (RVPL…EPSA), 369-408 (GHNG…LLQT), 459-498 (THAA…RKII), 511-550 (IIDI…VVRN), 598-638 (FHTD…RRYS), 746-785 (KTGD…EAEK), and 827-866 (AHLK…LGTL). Positions 914 to 924 (PAKRAEVKAPE) are enriched in basic and acidic residues. Disordered stretches follow at residues 914–935 (PAKR…QTDD) and 1023–1064 (GSAL…QQSE). Residues 925 to 935 (DRDEETAQTDD) show a composition bias toward acidic residues.

The sequence is that of WD repeat-containing protein on Y chromosome from Drosophila pseudoobscura pseudoobscura (Fruit fly).